The primary structure comprises 368 residues: Glutamate 5-kinase (368 aa).

Residue Lys-13 participates in ATP binding. Positions 54, 141, and 153 each coordinate substrate. Position 173 to 174 (173 to 174) interacts with ATP; sequence SD. One can recognise a PUA domain in the interval 278–355; that stretch reads RGEITVDAGA…AEIEAVLGYP (78 aa).

It belongs to the glutamate 5-kinase family.

It is found in the cytoplasm. The enzyme catalyses L-glutamate + ATP = L-glutamyl 5-phosphate + ADP. The protein operates within amino-acid biosynthesis; L-proline biosynthesis; L-glutamate 5-semialdehyde from L-glutamate: step 1/2. In terms of biological role, catalyzes the transfer of a phosphate group to glutamate to form L-glutamate 5-phosphate. This Dinoroseobacter shibae (strain DSM 16493 / NCIMB 14021 / DFL 12) protein is Glutamate 5-kinase.